The following is a 274-amino-acid chain: Ribosomal RNA small subunit methyltransferase A (274 aa).

S-adenosyl-L-methionine-binding residues include His-15, Leu-17, Gly-42, Glu-64, Asp-89, and Asn-109.

The protein belongs to the class I-like SAM-binding methyltransferase superfamily. rRNA adenine N(6)-methyltransferase family. RsmA subfamily.

It is found in the cytoplasm. It carries out the reaction adenosine(1518)/adenosine(1519) in 16S rRNA + 4 S-adenosyl-L-methionine = N(6)-dimethyladenosine(1518)/N(6)-dimethyladenosine(1519) in 16S rRNA + 4 S-adenosyl-L-homocysteine + 4 H(+). Specifically dimethylates two adjacent adenosines (A1518 and A1519) in the loop of a conserved hairpin near the 3'-end of 16S rRNA in the 30S particle. May play a critical role in biogenesis of 30S subunits. The protein is Ribosomal RNA small subunit methyltransferase A of Synechococcus sp. (strain RCC307).